Reading from the N-terminus, the 288-residue chain is Programmed cell death protein 1 (288 aa).

The signal sequence occupies residues Met-1 to Phe-24. A nivolumab binding region spans residues Leu-25–Pro-34. Residues Leu-25 to Val-170 are Extracellular-facing. The Ig-like V-type domain occupies Pro-35–Thr-145. N-linked (GlcNAc...) asparagine glycans are attached at residues Asn-49, Asn-58, Asn-74, and Asn-116. Cys-54 and Cys-123 are joined by a disulfide. Residues Met-70–Asp-77 are interaction with CD274/PDCD1L1. The pembrolizumab binding stretch occupies residues Asn-74–Gln-99. The chain crosses the membrane as a helical span at residues Val-171–Ile-191. Residues Cys-192 to Leu-288 are Cytoplasmic-facing. An ITIM motif motif is present at residues Val-221–Leu-226. Tyr-223 bears the Phosphotyrosine mark. Residue Lys-233 forms a Glycyl lysine isopeptide (Lys-Gly) (interchain with G-Cter in ubiquitin) linkage. At Thr-234 the chain carries Phosphothreonine; by MAPK3. The short motif at Glu-247–Ile-251 is the ITSM motif element. Phosphotyrosine is present on Tyr-248. The tract at residues Pro-254–Leu-288 is disordered. Residues Arg-278 to Leu-288 show a composition bias toward basic and acidic residues.

As to quaternary structure, monomer. Interacts with CD274/PDCD1L1. Interacts with CD273/PDCD1LG2. Interacts with FBXO38; leading to ubiquitination and degradation of PDCD1 by the proteasome. Ubiquitinated at Lys-233 by the SCF(FBXO38) complex, leading to its proteasomal degradation. Ubiquitinated via 'Lys-48'-linked polyubiquitin chains. Deubiquitinated and thus stabilized by USP5. In terms of processing, tyrosine phosphorylated at Tyr-223 (within ITIM motif) and Tyr-248 (ITSM motif) upon ligand binding. Phosphorylation at Tyr-248 promotes the recruitment of the protein tyrosine phosphatase PTPN11/SHP-2 that mediates dephosphorylation of key TCR proximal signaling molecules, such as ZAP70, PRKCQ/PKCtheta and CD247/CD3zeta. Phosphorylation at Thr-234 promotes the recruitment of the deubiquitinase USP5. Post-translationally, N-glycosylation at Asn-58 contains at least two N-acetylglucosamine units and one fucose. N-glycosylation does not affect binding to nivolumab drug.

It is found in the cell membrane. With respect to regulation, inhibited by pembrolizumab (also named MK-3475 or lambrolizumab), a monoclonal antibody that prevents the interaction with CD274/PDCD1L1. Inhibited by nivolumab (also named ONO-4538, BMS-936558 or Opdivo), a monoclonal antibody that prevents the interaction with CD274/PDCD1L1. The interaction with nivolumab is not dependent on glycosylation and depends on a loop at the N-terminus (N-terminal loop, corresponding to residues 25-34). Targeting the interaction between PDCD1 and CD274/PDCD1L1 with pembrolizumab and nivolumab antibodies has demonstrated great promise as a strategy for controlling and eradicating cancer. Pembrolizumab and nivolumab are used for treatment of patients with advanced melanoma. These antibodies are also effective against other cancers, such as non-small cell lung cancer, renal cell carcinoma, bladder cancer and Hodgkin's lymphoma. Functionally, inhibitory receptor on antigen activated T-cells that plays a critical role in induction and maintenance of immune tolerance to self. Delivers inhibitory signals upon binding to ligands CD274/PDCD1L1 and CD273/PDCD1LG2. Following T-cell receptor (TCR) engagement, PDCD1 associates with CD3-TCR in the immunological synapse and directly inhibits T-cell activation. Suppresses T-cell activation through the recruitment of PTPN11/SHP-2: following ligand-binding, PDCD1 is phosphorylated within the ITSM motif, leading to the recruitment of the protein tyrosine phosphatase PTPN11/SHP-2 that mediates dephosphorylation of key TCR proximal signaling molecules, such as ZAP70, PRKCQ/PKCtheta and CD247/CD3zeta. In terms of biological role, the PDCD1-mediated inhibitory pathway is exploited by tumors to attenuate anti-tumor immunity and escape destruction by the immune system, thereby facilitating tumor survival. The interaction with CD274/PDCD1L1 inhibits cytotoxic T lymphocytes (CTLs) effector function. The blockage of the PDCD1-mediated pathway results in the reversal of the exhausted T-cell phenotype and the normalization of the anti-tumor response, providing a rationale for cancer immunotherapy. The chain is Programmed cell death protein 1 from Homo sapiens (Human).